A 126-amino-acid polypeptide reads, in one-letter code: UPF0102 protein P9303_16141 (126 aa).

This sequence belongs to the UPF0102 family.

This is UPF0102 protein P9303_16141 from Prochlorococcus marinus (strain MIT 9303).